The following is a 161-amino-acid chain: Globin CTT-VIIB-8 (161 aa).

The first 16 residues, 1 to 16 (MKFFAVLALCIVGAIA), serve as a signal peptide directing secretion. One can recognise a Globin domain in the interval 18–161 (PLTADEASLV…NTYAIVVPRL (144 aa)). His-76 and His-111 together coordinate heme b.

The protein belongs to the globin family. As to quaternary structure, homodimer.

The protein is Globin CTT-VIIB-8 (CTT-7B8) of Chironomus thummi thummi (Midge).